A 1014-amino-acid chain; its full sequence is Calcium-transporting ATPase 2, plasma membrane-type (1014 aa).

Met-1 is modified (N-acetylmethionine). Residues 1–160 (MESYLNENFD…NKFAESEMRG (160 aa)) lie on the Cytoplasmic side of the membrane. An interaction with calmodulin region spans residues 20-31 (VLEKWRNLCGVV). Phosphoserine; by CPK1 is present on Ser-45. A helical transmembrane segment spans residues 161 to 181 (FWVFVWEALQDMTLMILGVCA). Over 182-199 (FVSLIVGIATEGWPKGSH) the chain is Lumenal. A helical transmembrane segment spans residues 200–220 (DGLGIAASILLVVFVTATSDY). Residues 221–348 (RQSLQFRDLD…DDETPLQVKL (128 aa)) are Cytoplasmic-facing. A helical transmembrane segment spans residues 349-368 (NGVATIIGKIGLFFAVVTFA). Over 369 to 398 (VLVQGMFMRKLSTGTHWVWSGDEALELLEY) the chain is Lumenal. A helical transmembrane segment spans residues 399 to 416 (FAIAVTIVVVAVPEGLPL). Over 417-810 (AVTLSLAFAM…KWGRSVYINI (394 aa)) the chain is Cytoplasmic. Asp-454 serves as the catalytic 4-aspartylphosphate intermediate. Mg(2+)-binding residues include Asp-755 and Asp-759. Residues 811 to 829 (QKFVQFQLTVNVVALVVNF) traverse the membrane as a helical segment. Residues 830–840 (SSACLTGSAPL) lie on the Lumenal side of the membrane. Residues 841-861 (TAVQLLWVNMIMDTLGALALA) traverse the membrane as a helical segment. Over 862 to 881 (TEPPNDELMKRLPVGRRGNF) the chain is Cytoplasmic. A helical membrane pass occupies residues 882 to 904 (ITNAMWRNILGQAVYQFIVIWIL). The Lumenal portion of the chain corresponds to 905–916 (QAKGKAMFGLDG). The helical transmembrane segment at 917–938 (PDSTLMLNTLIFNCFVFCQVFN) threads the bilayer. Over 939-956 (EISSREMEEIDVFKGILD) the chain is Cytoplasmic. A helical transmembrane segment spans residues 957 to 978 (NYVFVVVIGATVFFQIIIIEFL). Over 979–988 (GTFASTTPLT) the chain is Lumenal. Residues 989–1010 (ITQWIFSIFIGFLGMPIAAGLK) traverse the membrane as a helical segment. Residues 1011–1014 (TIPV) lie on the Cytoplasmic side of the membrane.

This sequence belongs to the cation transport ATPase (P-type) (TC 3.A.3) family. Type IIB subfamily.

It is found in the endoplasmic reticulum membrane. It catalyses the reaction Ca(2+)(in) + ATP + H2O = Ca(2+)(out) + ADP + phosphate + H(+). With respect to regulation, activated by calmodulin. This magnesium-dependent enzyme catalyzes the hydrolysis of ATP coupled with the translocation of calcium from the cytosol into the endoplasmic reticulum. The chain is Calcium-transporting ATPase 2, plasma membrane-type (ACA2) from Arabidopsis thaliana (Mouse-ear cress).